The chain runs to 202 residues: uncharacterized protein (202 aa).

Positions 118–202 (SSVSPVSSKK…KVSGTKKVKA (85 aa)) are disordered. Position 121 is a phosphoserine (Ser-121). Composition is skewed to basic residues over residues 142–163 (EKSK…KSKR) and 186–202 (SSKS…KVKA).

It is found in the nucleus. The protein localises to the nucleolus. This is an uncharacterized protein from Schizosaccharomyces pombe (strain 972 / ATCC 24843) (Fission yeast).